The chain runs to 370 residues: Integrin-linked kinase-associated serine/threonine phosphatase 2C (370 aa).

Met-1 bears the N-acetylmethionine mark. The segment at 1–69 (MDLFGDLPEP…SDEEKNGSEE (69 aa)) is disordered. Residue Ser-13 is modified to Phosphoserine. Residues 33 to 45 (SSGDSGSLDTSLS) are compositionally biased toward low complexity. Residues 46–69 (EEVKNEGKGAKRKASDEEKNGSEE) are compositionally biased toward basic and acidic residues. Residues 86–368 (KGYVAERKGE…DNVTVMVVRI (283 aa)) enclose the PPM-type phosphatase domain. Mn(2+) contacts are provided by Asp-130 and Gly-131. An N6-acetyllysine modification is found at Lys-188. Residues Asp-304 and Asp-359 each contribute to the Mn(2+) site.

It belongs to the PP2C family. In terms of assembly, interacts with ILK. It depends on Mg(2+) as a cofactor. Mn(2+) is required as a cofactor.

It localises to the cytoplasm. The enzyme catalyses O-phospho-L-seryl-[protein] + H2O = L-seryl-[protein] + phosphate. The catalysed reaction is O-phospho-L-threonyl-[protein] + H2O = L-threonyl-[protein] + phosphate. Functionally, protein phosphatase that may play a role in regulation of cell cycle progression via dephosphorylation of its substrates whose appropriate phosphorylation states might be crucial for cell proliferation. Selectively associates with integrin linked kinase (ILK), to modulate cell adhesion and growth factor signaling. Inhibits the ILK-GSK3B signaling axis and may play an important role in inhibiting oncogenic transformation. This Bos taurus (Bovine) protein is Integrin-linked kinase-associated serine/threonine phosphatase 2C (ILKAP).